The sequence spans 242 residues: Protein crossbronx (242 aa).

Residues 20–176 enclose the UBC core domain; it reads QQEYKILAEY…VQENIKESKA (157 aa).

It belongs to the ubiquitin-conjugating enzyme family. FTS subfamily.

This Drosophila ananassae (Fruit fly) protein is Protein crossbronx (cbx).